A 667-amino-acid polypeptide reads, in one-letter code: Probable E3 ubiquitin ligase complex SCF subunit sconB (667 aa).

Residues 1–55 (MNGSGSTAKESLFNPTPRKLGLPEDNTMTPYNGVRSIFDNSSGSRQLTDEHTNQE) are disordered. The region spanning 182–228 (IDFITALPPEISFKILSYLDTASLCRAAQVSRAWKCLADDDVVWHRM) is the F-box domain. 7 WD repeats span residues 347-386 (GHTN…RTLT), 388-426 (HTSG…STYT), 428-464 (HLGG…TFLL), 466-507 (GHSD…RTFQ), 549-593 (RQEP…CLRT), 594-633 (FFGH…CERT), and 636-667 (GHSG…SFKN). The segment at 528 to 562 (DHDAGHEEDSNASVSGDESPLRQEPCSPGASFFEG) is disordered.

The protein belongs to the WD repeat MET30/SCONB/SCON-2 family. As to quaternary structure, component of the SCF(sconB) E3 ubiquitin ligase complex.

The protein operates within protein modification; protein ubiquitination. In terms of biological role, component of the SCF(sconB) E3 ubiquitin ligase complex involved in the regulation of sulfur metabolite repression, probably by mediating the inactivation or degradation of the metR transcription factor. In Talaromyces stipitatus (strain ATCC 10500 / CBS 375.48 / QM 6759 / NRRL 1006) (Penicillium stipitatum), this protein is Probable E3 ubiquitin ligase complex SCF subunit sconB (sconB).